The following is a 489-amino-acid chain: Serine/threonine-protein kinase BSK2 (489 aa).

Residues 1–30 (MGCLHSKTANLPSSDDPSAPNKPESVNGDQ) are disordered. Residue Gly2 is the site of N-myristoyl glycine attachment. Residues 7–16 (KTANLPSSDD) show a composition bias toward polar residues. The region spanning 56-322 (SCIVSEGGEK…QEEVASHVLM (267 aa)) is the Protein kinase domain. ATP contacts are provided by residues 62 to 70 (GGEKAPNVV) and Lys84. Asp178 serves as the catalytic Proton acceptor.

It belongs to the protein kinase superfamily. Ser/Thr protein kinase family. In terms of processing, phosphorylated by BRI1 upon brassinolide (BL) treatment.

The protein localises to the cell membrane. It carries out the reaction L-seryl-[protein] + ATP = O-phospho-L-seryl-[protein] + ADP + H(+). It catalyses the reaction L-threonyl-[protein] + ATP = O-phospho-L-threonyl-[protein] + ADP + H(+). In terms of biological role, probable serine/threonine kinase that acts as a positive regulator of brassinosteroid (BR) signaling downstream of the receptor kinase BRI1. Mediates signal transduction from BRI1 by functioning as substrate of BRI1. In Arabidopsis thaliana (Mouse-ear cress), this protein is Serine/threonine-protein kinase BSK2.